The sequence spans 578 residues: Isocitrate dehydrogenase kinase/phosphatase (578 aa).

Residues 315–321 (APGIRGM) and Lys336 contribute to the ATP site. Asp371 is an active-site residue.

Belongs to the AceK family.

The protein resides in the cytoplasm. The enzyme catalyses L-seryl-[isocitrate dehydrogenase] + ATP = O-phospho-L-seryl-[isocitrate dehydrogenase] + ADP + H(+). Its function is as follows. Bifunctional enzyme which can phosphorylate or dephosphorylate isocitrate dehydrogenase (IDH) on a specific serine residue. This is a regulatory mechanism which enables bacteria to bypass the Krebs cycle via the glyoxylate shunt in response to the source of carbon. When bacteria are grown on glucose, IDH is fully active and unphosphorylated, but when grown on acetate or ethanol, the activity of IDH declines drastically concomitant with its phosphorylation. In Escherichia coli (strain ATCC 8739 / DSM 1576 / NBRC 3972 / NCIMB 8545 / WDCM 00012 / Crooks), this protein is Isocitrate dehydrogenase kinase/phosphatase.